We begin with the raw amino-acid sequence, 395 residues long: Succinyl-diaminopimelate desuccinylase (395 aa).

His74 contributes to the Zn(2+) binding site. Asp76 is an active-site residue. Asp107 is a Zn(2+) binding site. Glu141 serves as the catalytic Proton acceptor. Glu142, Glu170, and His368 together coordinate Zn(2+).

The protein belongs to the peptidase M20A family. DapE subfamily. Homodimer. Requires Zn(2+) as cofactor. Co(2+) serves as cofactor.

It catalyses the reaction N-succinyl-(2S,6S)-2,6-diaminopimelate + H2O = (2S,6S)-2,6-diaminopimelate + succinate. It functions in the pathway amino-acid biosynthesis; L-lysine biosynthesis via DAP pathway; LL-2,6-diaminopimelate from (S)-tetrahydrodipicolinate (succinylase route): step 3/3. In terms of biological role, catalyzes the hydrolysis of N-succinyl-L,L-diaminopimelic acid (SDAP), forming succinate and LL-2,6-diaminopimelate (DAP), an intermediate involved in the bacterial biosynthesis of lysine and meso-diaminopimelic acid, an essential component of bacterial cell walls. The polypeptide is Succinyl-diaminopimelate desuccinylase (Brucella melitensis biotype 1 (strain ATCC 23456 / CCUG 17765 / NCTC 10094 / 16M)).